We begin with the raw amino-acid sequence, 33 residues long: MNIELIVQLTSLILISIAGPIIIALLFVKQGNL.

Residues 5 to 25 (LIVQLTSLILISIAGPIIIAL) traverse the membrane as a helical segment.

It belongs to the Psb30/Ycf12 family. As to quaternary structure, PSII is composed of 1 copy each of membrane proteins PsbA, PsbB, PsbC, PsbD, PsbE, PsbF, PsbH, PsbI, PsbJ, PsbK, PsbL, PsbM, PsbT, PsbY, PsbZ, Psb30/Ycf12, peripheral proteins of the oxygen-evolving complex and a large number of cofactors. It forms dimeric complexes.

It localises to the plastid. The protein resides in the chloroplast thylakoid membrane. Its function is as follows. A core subunit of photosystem II (PSII), probably helps stabilize the reaction center. This Euglena myxocylindracea protein is Photosystem II reaction center protein Psb30.